A 93-amino-acid chain; its full sequence is MEIKILRSGENYLELQIDGEEHTVGNLLKGYLLKVPGVKFASYSKPHPLIDSIILKIMTDGSISPKEALVKAIELAEEDTNKFIEEVKSIEKR.

The protein belongs to the archaeal Rpo11/eukaryotic RPB11/RPC19 RNA polymerase subunit family. Part of the RNA polymerase complex.

The protein localises to the cytoplasm. It catalyses the reaction RNA(n) + a ribonucleoside 5'-triphosphate = RNA(n+1) + diphosphate. DNA-dependent RNA polymerase (RNAP) catalyzes the transcription of DNA into RNA using the four ribonucleoside triphosphates as substrates. The protein is DNA-directed RNA polymerase subunit Rpo11 of Sulfurisphaera tokodaii (strain DSM 16993 / JCM 10545 / NBRC 100140 / 7) (Sulfolobus tokodaii).